Consider the following 160-residue polypeptide: Large ribosomal subunit protein eL21 (160 aa).

2 stretches are compositionally biased toward basic and acidic residues: residues 112-123 (NDQKKKEAKEKG) and 136-145 (REAHFVRTNG). Residues 112 to 145 (NDQKKKEAKEKGTWVQLKRQPAPPREAHFVRTNG) are disordered.

This sequence belongs to the eukaryotic ribosomal protein eL21 family. In terms of assembly, component of the large ribosomal subunit.

It localises to the cytoplasm. The protein resides in the cytosol. It is found in the endoplasmic reticulum. Component of the large ribosomal subunit. The ribosome is a large ribonucleoprotein complex responsible for the synthesis of proteins in the cell. In Capra hircus (Goat), this protein is Large ribosomal subunit protein eL21 (RPL21).